A 395-amino-acid chain; its full sequence is RNA demethylase ALKBH5 (395 aa).

Disordered stretches follow at residues 1–28 and 47–83; these read MAAA…AGSR and AAEP…EEEA. A2 bears the N-acetylalanine mark. A Glycyl lysine isopeptide (Lys-Gly) (interchain with G-Cter in ubiquitin) cross-link involves residue K58. Residues 60–83 show a composition bias toward basic and acidic residues; the sequence is KYQEDSDPERSDYEEHQLQKEEEA. Residues S65 and S70 each carry the phosphoserine modification. Positions 68-117 form a coiled coil; the sequence is ERSDYEEHQLQKEEEARKVKSGIRQIRLFSQDECSKIEARIDEVVSRAEK. Y72 is subject to Phosphotyrosine. Residue K87 forms a Glycyl lysine isopeptide (Lys-Gly) (interchain with G-Cter in SUMO1) linkage. Phosphoserine is present on S88. At K133 the chain carries N6-acetyllysine. Residue Y140 is part of the active site. Residues N194, Y196, and H205 each contribute to the 2-oxoglutarate site. Cysteines 231 and 268 form a disulfide. K236 is subject to N6-acetyllysine. 2-oxoglutarate contacts are provided by H267 and R278. The interval 294 to 395 is disordered; it reads ETKSLSSSTL…PTRKVKMRRH (102 aa). A compositionally biased stretch (low complexity) spans 296-306; the sequence is KSLSSSTLPPS. A Glycyl lysine isopeptide (Lys-Gly) (interchain with G-Cter in SUMO1) cross-link involves residue K322. S326 carries the phosphoserine modification. A Glycyl lysine isopeptide (Lys-Gly) (interchain with G-Cter in SUMO2) cross-link involves residue K329. The span at 329–350 shows a compositional bias: basic and acidic residues; that stretch reads KADPDAAHRPRILEMDKEENRR. An Omega-N-methylarginine modification is found at R360. 4 positions are modified to phosphoserine: S362, S372, S375, and S385.

It belongs to the alkB family. Monomer. Interacts with RBM33; promoting desumoylation by SENP1 and recruitment to N(6)-methyladenosine-containing mRNAs. Interacts (when acetylated by KAT8) with PSPC1; interaction facilitates recognition of N(6)-methyladenosine (m6A) mRNA. Requires Fe(2+) as cofactor. Phosphorylated at Ser-88 and Ser-326 in response to reactive oxygen species (ROS), promoting sumoylation and inactivation. Post-translationally, acetylated by KAT8 at Lys-236, promoting interaction with PSPC1, thereby facilitating recognition of N(6)-methyladenosine (m6A) mRNA by ALKBH5. Deacetylated at Lys-236 by HDAC7. In terms of processing, sumoylated at Lys-87 and Lys-322 by PIAS4 following phosphorylation at Ser-88 and Ser-326 in response to reactive oxygen species (ROS), inhibiting the RNA demethylase activity. Desumoylated by SENP1; relieving RNA demethylase inhibition, leading to N(6)-methyladenosine-containing mRNAs demethylation. Ubiquitinated at Lys-58 via 'Lys-48'-linked polyubiquitin chain, leading to its degradation by the proteasome. Deubiquitinated at Lys-58 by USP9X, promoting its stabilizazion. In terms of tissue distribution, widely expressed, with highest expression in testis. In testis, present in almost all testicular cell types except elongating and elongated spermatids (at protein level). Among spermatogenic cells, present at high level in spermatocytes; medium levels in spermatogonia and lower levels in round spermatids (at protein level).

It localises to the nucleus speckle. The catalysed reaction is an N(6)-methyladenosine in mRNA + 2-oxoglutarate + O2 = an adenosine in mRNA + formaldehyde + succinate + CO2. Its activity is regulated as follows. RNA demethylase activity is inhibited following sumoylation. Inhibition is relieved following desumoylation. Inhibited by histone demethylase inhibitor IOX1. Dioxygenase that specifically demethylates N(6)-methyladenosine (m6A) RNA, the most prevalent internal modification of messenger RNA (mRNA) in higher eukaryotes. Demethylates RNA by oxidative demethylation, which requires molecular oxygen, alpha-ketoglutarate and iron. Demethylation of m6A mRNA affects mRNA processing, translation and export. Can also demethylate N(6)-methyladenosine in single-stranded DNA (in vitro). Required for the late meiotic and haploid phases of spermatogenesis by mediating m6A demethylation in spermatocytes and round spermatids: m6A demethylation of target transcripts is required for correct splicing and the production of longer 3'-UTR mRNAs in male germ cells. Involved in paraspeckle assembly, a nuclear membraneless organelle, by undergoing liquid-liquid phase separation. Paraspeckle assembly is coupled with m6A demethylation of RNAs, such as NEAT1 non-coding RNA. Also acts as a negative regulator of T-cell development: inhibits gamma-delta T-cell proliferation via demethylation of JAG1 and NOTCH2 transcripts. Inhibits regulatory T-cell (Treg) recruitment by mediating demethylation and destabilization of CCL28 mRNAs. The sequence is that of RNA demethylase ALKBH5 from Mus musculus (Mouse).